A 271-amino-acid chain; its full sequence is Rhomboid-type serine protease 2 (271 aa).

6 helical membrane-spanning segments follow: residues 16 to 36 (GLAV…NLVY), 64 to 84 (HLSF…IVMF), 89 to 111 (GTLY…YCLI), 115 to 137 (LFPN…YFAV), 152 to 172 (FSFP…LLAP), and 176 to 196 (LPGH…ENWV). Residue Ser125 is the Nucleophile of the active site. The active site involves His179. A disordered region spans residues 252-271 (HNTDTPAEPTFQGNGRVLGN).

Belongs to the peptidase S54 family.

Its subcellular location is the golgi apparatus membrane. The protein resides in the golgi apparatus. It is found in the cis-Golgi network membrane. It carries out the reaction Cleaves type-1 transmembrane domains using a catalytic dyad composed of serine and histidine that are contributed by different transmembrane domains.. Probable rhomboid-type serine protease that catalyzes intramembrane proteolysis. This is Rhomboid-type serine protease 2 (RBD2) from Kluyveromyces lactis (strain ATCC 8585 / CBS 2359 / DSM 70799 / NBRC 1267 / NRRL Y-1140 / WM37) (Yeast).